We begin with the raw amino-acid sequence, 463 residues long: MSTGTVVQVIGAVVDVEFPQDSVPRVYDALKITGEGACNGLVLEVQQQLGGGVVRTIAMGSSDGLRRGLEVANSGSPITVPVGVATLGRIMNVLGEPIDEAGPIGEEERYVIHRAAPSYEDQSNSTELLETGIKVIDLVCPFAKGGKVGLFGGAGVGKTVNMMELINNIAKAHSGLSVFAGVGERTREGNDFYYEMEDSGVLDKVAMVYGQMNEPPGNRLRVALTGLSIAEKFRDEGRDVLLFVDNIYRYTLAGTEVSALLGRMPSAVGYQPTLAEEMGVLQERITSTKSGSITSVQAVYVPADDLTDPSPATTFAHLDATVVLSRQIASLGIYPAVDPLDSTSRQLDPQVVGQEHYDVANGVQTVLQRYKELKDIIAILGMDELSDDDKTMVFRARKIERFLSQPFFVAEVFTGSPGKYVSLKDTIRGFKGILDGEFDHIPEQAFYMVGSIDEAVEKANKKK.

152 to 159 (GGAGVGKT) provides a ligand contact to ATP.

This sequence belongs to the ATPase alpha/beta chains family. F-type ATPases have 2 components, CF(1) - the catalytic core - and CF(0) - the membrane proton channel. CF(1) has five subunits: alpha(3), beta(3), gamma(1), delta(1), epsilon(1). CF(0) has three main subunits: a(1), b(2) and c(9-12). The alpha and beta chains form an alternating ring which encloses part of the gamma chain. CF(1) is attached to CF(0) by a central stalk formed by the gamma and epsilon chains, while a peripheral stalk is formed by the delta and b chains.

The protein resides in the cell inner membrane. It catalyses the reaction ATP + H2O + 4 H(+)(in) = ADP + phosphate + 5 H(+)(out). Produces ATP from ADP in the presence of a proton gradient across the membrane. The catalytic sites are hosted primarily by the beta subunits. The protein is ATP synthase subunit beta 1 of Shewanella frigidimarina (strain NCIMB 400).